A 304-amino-acid polypeptide reads, in one-letter code: MSEKNLLTALSKMITEQRNPNSMNIDQLSALELVKVINQEDKQVPLAVEKCLAQIAQAVEKIVQAFQNGGRLVYIGAGTSGRLGVLDASECPPTYGVPPEIVVGIIAGGERALRHPIEGAEDNTERGKADLQAVNFSQKDVLVGIAASGRTPYVIGALEYAKSLGATTVSIASNPNSAMAQIAEIAIDTVVGPEVLTGSSRMKSGTAQKLVLNMLTTASMVMIGKCYSNLMVDVQASNEKLKARAIKIVMEATECDRTVAENTLKIAENNAKLAIMMILSDSDKTTAEQLLSKHHGKLRQALVN.

Residues Ile62–Lys225 enclose the SIS domain. Residue Glu90 is the Proton donor of the active site. Glu121 is a catalytic residue.

The protein belongs to the GCKR-like family. MurNAc-6-P etherase subfamily. In terms of assembly, homodimer.

The enzyme catalyses N-acetyl-D-muramate 6-phosphate + H2O = N-acetyl-D-glucosamine 6-phosphate + (R)-lactate. The protein operates within amino-sugar metabolism; 1,6-anhydro-N-acetylmuramate degradation. It participates in amino-sugar metabolism; N-acetylmuramate degradation. Its pathway is cell wall biogenesis; peptidoglycan recycling. Specifically catalyzes the cleavage of the D-lactyl ether substituent of MurNAc 6-phosphate, producing GlcNAc 6-phosphate and D-lactate. Together with AnmK, is also required for the utilization of anhydro-N-acetylmuramic acid (anhMurNAc) either imported from the medium or derived from its own cell wall murein, and thus plays a role in cell wall recycling. This Actinobacillus pleuropneumoniae serotype 5b (strain L20) protein is N-acetylmuramic acid 6-phosphate etherase.